Here is a 38-residue protein sequence, read N- to C-terminus: Potassium channel toxin alpha-KTx 2.3 (38 aa).

Disulfide bonds link Cys-7-Cys-29, Cys-13-Cys-34, and Cys-17-Cys-36.

The protein belongs to the short scorpion toxin superfamily. Potassium channel inhibitor family. Alpha-KTx 02 subfamily. As to expression, expressed by the venom gland.

Its subcellular location is the secreted. Inhibitor of voltage-gated potassium channels (Kv). It is capable of displacing the binding of radio-labeled noxiustoxin (AC P08815) to rat brain synaptosomes with high affinity (about 100 pM). It is also capable of inhibiting transient potassium-currents (resembling I(A)-type currents), in cultured rat cerebellar granule cells. About 50% of the peak currents are reduced by application of a 1.5 uM solution of this toxin. The chain is Potassium channel toxin alpha-KTx 2.3 from Centruroides limpidus (Mexican scorpion).